Reading from the N-terminus, the 120-residue chain is Large ribosomal subunit protein bL20 (120 aa).

This sequence belongs to the bacterial ribosomal protein bL20 family.

In terms of biological role, binds directly to 23S ribosomal RNA and is necessary for the in vitro assembly process of the 50S ribosomal subunit. It is not involved in the protein synthesizing functions of that subunit. The protein is Large ribosomal subunit protein bL20 of Novosphingobium aromaticivorans (strain ATCC 700278 / DSM 12444 / CCUG 56034 / CIP 105152 / NBRC 16084 / F199).